A 503-amino-acid polypeptide reads, in one-letter code: TGF-beta receptor type-1 (503 aa).

The signal sequence occupies residues 1 to 29; that stretch reads MEAAAAAPRRPQLLIVLVAAATLLPGAKA. Topologically, residues 30–126 are extracellular; the sequence is LQCFCHLCTK…QSAGLGPVEL (97 aa). Disulfide bonds link C32/C50, C34/C37, C44/C67, C82/C96, and C97/C102. The N-linked (GlcNAc...) asparagine glycan is linked to N41. The chain crosses the membrane as a helical span at residues 127-147; it reads AAVIAGPVCFVCIALMLMVYI. Over 148–503 the chain is Cytoplasmic; the sequence is CHNRTVIHHR…QLSQQEGIKM (356 aa). A Phosphoserine modification is found at S165. The GS domain occupies 175-204; sequence TTLKDLIYDMTTSGSGSGLPLLVQRTIART. A phosphothreonine; by TGFBR2 mark is found at T185 and T186. Phosphoserine; by TGFBR2 is present on residues S187, S189, and S191. The FKBP1A-binding signature appears at 193 to 194; that stretch reads LP. One can recognise a Protein kinase domain in the interval 205–495; the sequence is IVLQESIGKG…LRIKKTLSQL (291 aa). Residues 211–219 and K232 contribute to the ATP site; that span reads IGKGRFGEV. A Glycyl lysine isopeptide (Lys-Gly) (interchain with G-Cter in ubiquitin) cross-link involves residue K268. D333 (proton acceptor) is an active-site residue. A Glycyl lysine isopeptide (Lys-Gly) (interchain with G-Cter in SUMO) cross-link involves residue K391.

This sequence belongs to the protein kinase superfamily. TKL Ser/Thr protein kinase family. TGFB receptor subfamily. Homodimer; in the endoplasmic reticulum but also at the cell membrane. Heterohexamer; TGFB1, TGFB2 and TGFB3 homodimeric ligands assemble a functional receptor composed of two TGFBR1 and TGFBR2 heterodimers to form a ligand-receptor heterohexamer. The respective affinity of TGBRB1 and TGFBR2 for the ligands may modulate the kinetics of assembly of the receptor and may explain the different biological activities of TGFB1, TGFB2 and TGFB3. Component of a complex composed of TSC22D1 (via N-terminus), TGFBR1 and TGFBR2; the interaction between TSC22D1 and TGFBR1 is inhibited by SMAD7 and promoted by TGFB1. Interacts with CD109; inhibits TGF-beta receptor activation in keratinocytes. Interacts with RBPMS. Interacts (unphosphorylated) with FKBP1A; prevents TGFBR1 phosphorylation by TGFBR2 and stabilizes it in the inactive conformation. Interacts with SMAD2, SMAD3 and ZFYVE9; ZFYVE9 recruits SMAD2 and SMAD3 to the TGF-beta receptor. Interacts with TRAF6 and MAP3K7; induces MAP3K7 activation by TRAF6. Interacts with PARD6A; involved in TGF-beta induced epithelial to mesenchymal transition. Interacts with NEDD4L. Interacts with SMAD7, SMURF1 and SMURF2; SMAD7 recruits NEDD4L, SMURF1 and SMURF2 to the TGF-beta receptor. Interacts with USP15 and VPS39. Interacts with SDCBP (via C-terminus). Interacts with CAV1 and this interaction is impaired in the presence of SDCBP. Interacts with APPL1; interaction is TGF beta dependent; mediates trafficking of the TGFBR1 from the endosomes to the nucleus via microtubules in a TRAF6-dependent manner. Interacts with GPR50; this interaction promotes the constitutive activation of SMAD signaling pathway. Requires Mg(2+) as cofactor. Mn(2+) is required as a cofactor. Phosphorylated at basal levels in the absence of ligand. Activated upon phosphorylation by TGFBR2, mainly in the GS domain. Phosphorylation in the GS domain abrogates FKBP1A-binding. Post-translationally, N-Glycosylated. In terms of processing, ubiquitinated; undergoes ubiquitination catalyzed by several E3 ubiquitin ligases including SMURF1, SMURF2 and NEDD4L2. Results in the proteasomal and/or lysosomal degradation of the receptor thereby negatively regulating its activity. Deubiquitinated by USP15, leading to stabilization of the protein and enhanced TGF-beta signal. Its ubiquitination and proteasome-mediated degradation is negatively regulated by SDCBP. Ubiquitinated by BFAR via'Lys-63'-linked ubiquitination at Lys-268, leading to TGF-beta signaling activation.

It localises to the cell membrane. Its subcellular location is the cell junction. It is found in the tight junction. The protein resides in the membrane raft. The protein localises to the cell surface. It catalyses the reaction L-threonyl-[receptor-protein] + ATP = O-phospho-L-threonyl-[receptor-protein] + ADP + H(+). The catalysed reaction is L-seryl-[receptor-protein] + ATP = O-phospho-L-seryl-[receptor-protein] + ADP + H(+). Kept in an inactive conformation by FKBP1A preventing receptor activation in absence of ligand. CD109 is another inhibitor of the receptor. In terms of biological role, transmembrane serine/threonine kinase forming with the TGF-beta type II serine/threonine kinase receptor, TGFBR2, the non-promiscuous receptor for the TGF-beta cytokines TGFB1, TGFB2 and TGFB3. Transduces the TGFB1, TGFB2 and TGFB3 signal from the cell surface to the cytoplasm and is thus regulating a plethora of physiological and pathological processes including cell cycle arrest in epithelial and hematopoietic cells, control of mesenchymal cell proliferation and differentiation, wound healing, extracellular matrix production, immunosuppression and carcinogenesis. The formation of the receptor complex composed of 2 TGFBR1 and 2 TGFBR2 molecules symmetrically bound to the cytokine dimer results in the phosphorylation and the activation of TGFBR1 by the constitutively active TGFBR2. Activated TGFBR1 phosphorylates SMAD2 which dissociates from the receptor and interacts with SMAD4. The SMAD2-SMAD4 complex is subsequently translocated to the nucleus where it modulates the transcription of the TGF-beta-regulated genes. This constitutes the canonical SMAD-dependent TGF-beta signaling cascade. Also involved in non-canonical, SMAD-independent TGF-beta signaling pathways. For instance, TGFBR1 induces TRAF6 autoubiquitination which in turn results in MAP3K7 ubiquitination and activation to trigger apoptosis. Also regulates epithelial to mesenchymal transition through a SMAD-independent signaling pathway through PARD6A phosphorylation and activation. The protein is TGF-beta receptor type-1 (Tgfbr1) of Mus musculus (Mouse).